Reading from the N-terminus, the 360-residue chain is Photosystem II protein D1 1 (360 aa).

3 consecutive transmembrane segments (helical) span residues 29–46, 118–133, and 142–156; these read YVGW…TATT, HFLI…EWEL, and WICV…AATA. H118 is a binding site for chlorophyll a. Y126 serves as a coordination point for pheophytin a. Residues D170 and E189 each contribute to the [CaMn4O5] cluster site. A helical membrane pass occupies residues 197 to 218; sequence FHMLGVAGVFGGSLFSAMHGSL. H198 is a chlorophyll a binding site. Residues H215 and 264–265 contribute to the a quinone site; that span reads SF. H215 lines the Fe cation pocket. A Fe cation-binding site is contributed by H272. Residues 274-288 traverse the membrane as a helical segment; sequence FLGAWPVVGIWFTAL. Residues H332, E333, D342, and A344 each contribute to the [CaMn4O5] cluster site. A propeptide spanning residues 345 to 360 is cleaved from the precursor; that stretch reads AGEQAPVALQAPAING.

Belongs to the reaction center PufL/M/PsbA/D family. PSII is composed of 1 copy each of membrane proteins PsbA, PsbB, PsbC, PsbD, PsbE, PsbF, PsbH, PsbI, PsbJ, PsbK, PsbL, PsbM, PsbT, PsbX, PsbY, PsbZ, Psb30/Ycf12, peripheral proteins PsbO, CyanoQ (PsbQ), PsbU, PsbV and a large number of cofactors. It forms dimeric complexes. It depends on The D1/D2 heterodimer binds P680, chlorophylls that are the primary electron donor of PSII, and subsequent electron acceptors. It shares a non-heme iron and each subunit binds pheophytin, quinone, additional chlorophylls, carotenoids and lipids. D1 provides most of the ligands for the Mn4-Ca-O5 cluster of the oxygen-evolving complex (OEC). There is also a Cl(-1) ion associated with D1 and D2, which is required for oxygen evolution. The PSII complex binds additional chlorophylls, carotenoids and specific lipids. as a cofactor. Tyr-161 forms a radical intermediate that is referred to as redox-active TyrZ, YZ or Y-Z. Post-translationally, C-terminally processed by CtpA; processing is essential to allow assembly of the oxygen-evolving complex and thus photosynthetic growth.

It is found in the cellular thylakoid membrane. It carries out the reaction 2 a plastoquinone + 4 hnu + 2 H2O = 2 a plastoquinol + O2. In terms of biological role, photosystem II (PSII) is a light-driven water:plastoquinone oxidoreductase that uses light energy to abstract electrons from H(2)O, generating O(2) and a proton gradient subsequently used for ATP formation. It consists of a core antenna complex that captures photons, and an electron transfer chain that converts photonic excitation into a charge separation. The D1/D2 (PsbA/PsbD) reaction center heterodimer binds P680, the primary electron donor of PSII as well as several subsequent electron acceptors. The chain is Photosystem II protein D1 1 from Picosynechococcus sp. (strain ATCC 27264 / PCC 7002 / PR-6) (Agmenellum quadruplicatum).